Consider the following 194-residue polypeptide: Imidazoleglycerol-phosphate dehydratase (194 aa).

The protein belongs to the imidazoleglycerol-phosphate dehydratase family.

Its subcellular location is the cytoplasm. It catalyses the reaction D-erythro-1-(imidazol-4-yl)glycerol 3-phosphate = 3-(imidazol-4-yl)-2-oxopropyl phosphate + H2O. The protein operates within amino-acid biosynthesis; L-histidine biosynthesis; L-histidine from 5-phospho-alpha-D-ribose 1-diphosphate: step 6/9. This Listeria welshimeri serovar 6b (strain ATCC 35897 / DSM 20650 / CCUG 15529 / CIP 8149 / NCTC 11857 / SLCC 5334 / V8) protein is Imidazoleglycerol-phosphate dehydratase.